A 227-amino-acid chain; its full sequence is Orotate phosphoribosyltransferase (227 aa).

5-phospho-alpha-D-ribose 1-diphosphate-binding residues include lysine 51, arginine 119, lysine 120, and lysine 123. Positions 149 and 177 each coordinate orotate.

Belongs to the purine/pyrimidine phosphoribosyltransferase family. PyrE subfamily. As to quaternary structure, homodimer. In terms of tissue distribution, expressed in body wall muscles, spermatheca and vulva muscles.

The catalysed reaction is orotidine 5'-phosphate + diphosphate = orotate + 5-phospho-alpha-D-ribose 1-diphosphate. It carries out the reaction UMP + diphosphate = 5-phospho-alpha-D-ribose 1-diphosphate + uracil. It participates in pyrimidine metabolism; UMP biosynthesis via de novo pathway; UMP from orotate: step 1/2. Its pathway is pyrimidine metabolism; UMP biosynthesis via salvage pathway; UMP from uracil: step 1/1. Its function is as follows. Phosphoribosyltransferase which catalyzes the formation of UMP from uracil in vitro and thus may be involved in UMP biosynthesis via the salvage pathway. May also participate in the first step of UMP synthesis by catalyzing the formation of orotidine 5'-phosphate, a UMP precursor, from orotate. The protein is Orotate phosphoribosyltransferase of Caenorhabditis elegans.